The chain runs to 131 residues: 14.7 kDa heat shock protein (131 aa).

Positions 1 to 11 (MSRNMEVNAGS) are enriched in polar residues. The tract at residues 1–20 (MSRNMEVNAGSSGEIPSPIR) is disordered. The region spanning 22 to 131 (RFQKSGSQAV…INVKERILHY (110 aa)) is the sHSP domain.

The protein belongs to the small heat shock protein (HSP20) family. May form oligomeric structures.

It is found in the cytoplasm. The sequence is that of 14.7 kDa heat shock protein (HSP14.7) from Arabidopsis thaliana (Mouse-ear cress).